The primary structure comprises 345 residues: D-alanine--D-alanine ligase (345 aa).

The region spanning 133–332 (KWLCHARGVK…LPHTKRAKVT (200 aa)) is the ATP-grasp domain. 160 to 211 (AYPIIVKPSRLGSSIGVSIVKDESKLDYALDSAFEFDNTVIVEPFLEGVKEY) lines the ATP pocket. Positions 284, 296, and 298 each coordinate Mg(2+).

The protein belongs to the D-alanine--D-alanine ligase family. The cofactor is Mg(2+). Mn(2+) serves as cofactor.

Its subcellular location is the cytoplasm. The enzyme catalyses 2 D-alanine + ATP = D-alanyl-D-alanine + ADP + phosphate + H(+). It participates in cell wall biogenesis; peptidoglycan biosynthesis. Cell wall formation. The chain is D-alanine--D-alanine ligase from Sulfurimonas denitrificans (strain ATCC 33889 / DSM 1251) (Thiomicrospira denitrificans (strain ATCC 33889 / DSM 1251)).